Consider the following 490-residue polypeptide: MNYFNTLNFTQKINQINKCRFMKKEEFNKKNDILKNKNIVIVGCGAQGLNQGLNMRDAGLNISYALKKNSIANKNQSWINAIENNFKVDDYDALIPDADLVINLTPDKQHHSVIKKLQKLMKKNAVLGYSHGFNIVEFGEKIRKDITVIMVAPKCPGTEVREEYKRGFGVPTLIAVHHENDINKIGLEVAKAWAFSTGGHRAGVLESSFIAEVKSDLMGEQTILCGMLQTASLLCYEKLITEKCNPAYSAKLIQNGWETITESLKHGGITLMMDRLSNSSKIRAYKLSKEIKKILSPLFQKHMDDIISGEFSNEMMKDWENQDLKLLNWRYKTKNTSFETAPVYNEKIPEQEYYDHGILMIAILKSGIELSFEKMIETGIKEESAYYESLHELPLIANTIARKKLYEMNKVISDTAEYGSYLFSESAYPILKEFISTLNKSDLGCALSHQSVNNIELYRINQKIQNHPIEIIGCTLRNYMKKMKAITVAK.

The KARI N-terminal Rossmann domain maps to 16–207; it reads INKCRFMKKE…GGHRAGVLES (192 aa). Residues 44 to 47, Lys-67, Ser-77, and 107 to 109 each bind NADP(+); these read CGAQ and DKQ. Residue His-131 is part of the active site. Gly-157 provides a ligand contact to NADP(+). 2 consecutive KARI C-terminal knotted domains span residues 208-343 and 344-483; these read SFIA…TAPV and YNEK…MKKM. Mg(2+)-binding residues include Asp-216, Glu-220, Glu-388, and Glu-392. Ser-413 contributes to the substrate binding site.

This sequence belongs to the ketol-acid reductoisomerase family. It depends on Mg(2+) as a cofactor.

It catalyses the reaction (2R)-2,3-dihydroxy-3-methylbutanoate + NADP(+) = (2S)-2-acetolactate + NADPH + H(+). The enzyme catalyses (2R,3R)-2,3-dihydroxy-3-methylpentanoate + NADP(+) = (S)-2-ethyl-2-hydroxy-3-oxobutanoate + NADPH + H(+). It functions in the pathway amino-acid biosynthesis; L-isoleucine biosynthesis; L-isoleucine from 2-oxobutanoate: step 2/4. The protein operates within amino-acid biosynthesis; L-valine biosynthesis; L-valine from pyruvate: step 2/4. Involved in the biosynthesis of branched-chain amino acids (BCAA). Catalyzes an alkyl-migration followed by a ketol-acid reduction of (S)-2-acetolactate (S2AL) to yield (R)-2,3-dihydroxy-isovalerate. In the isomerase reaction, S2AL is rearranged via a Mg-dependent methyl migration to produce 3-hydroxy-3-methyl-2-ketobutyrate (HMKB). In the reductase reaction, this 2-ketoacid undergoes a metal-dependent reduction by NADPH to yield (R)-2,3-dihydroxy-isovalerate. The chain is Ketol-acid reductoisomerase (NADP(+)) from Buchnera aphidicola subsp. Acyrthosiphon pisum (strain 5A).